A 150-amino-acid chain; its full sequence is Ribonuclease pancreatic (150 aa).

A signal peptide spans 1 to 26 (MALKSLVLLSLLVLVLLLVRVQPSLG). Lys-27 and Lys-33 each carry an N-linked (Glc) (glycation) lysine; in vitro glycan. Residues Lys-33 and Arg-36 each contribute to the substrate site. The Proton acceptor role is filled by His-38. Disulfide bonds link Cys-52/Cys-110, Cys-66/Cys-121, Cys-84/Cys-136, and Cys-91/Cys-98. Residue Asn-60 is glycosylated (N-linked (GlcNAc...) asparagine; partial). N-linked (Glc) (glycation) lysine; in vitro glycans are attached at residues Lys-63 and Lys-67. Substrate-binding positions include 67–71 (KPVNT), Lys-92, and Arg-111. Residue His-145 is the Proton donor of the active site.

It belongs to the pancreatic ribonuclease family. In terms of assembly, interacts with and forms tight 1:1 complexes with RNH1. Dimerization of two such complexes may occur. Interaction with RNH1 inhibits this protein. Monomer. Pancreas.

The protein localises to the secreted. The catalysed reaction is an [RNA] containing cytidine + H2O = an [RNA]-3'-cytidine-3'-phosphate + a 5'-hydroxy-ribonucleotide-3'-[RNA].. It catalyses the reaction an [RNA] containing uridine + H2O = an [RNA]-3'-uridine-3'-phosphate + a 5'-hydroxy-ribonucleotide-3'-[RNA].. In terms of biological role, endonuclease that catalyzes the cleavage of RNA on the 3' side of pyrimidine nucleotides. Acts on single-stranded and double-stranded RNA. The sequence is that of Ribonuclease pancreatic (RNASE1) from Bos taurus (Bovine).